The following is a 399-amino-acid chain: Argininosuccinate synthase (399 aa).

9-17 (AYSGGLDTS) provides a ligand contact to ATP. Tyrosine 85 is an L-citrulline binding site. Glycine 115 contacts ATP. L-aspartate is bound by residues threonine 117, asparagine 121, and aspartate 122. Asparagine 121 is a binding site for L-citrulline. Residues arginine 125, serine 173, glutamate 258, and tyrosine 270 each coordinate L-citrulline.

The protein belongs to the argininosuccinate synthase family. Type 1 subfamily. As to quaternary structure, homotetramer.

The protein resides in the cytoplasm. It carries out the reaction L-citrulline + L-aspartate + ATP = 2-(N(omega)-L-arginino)succinate + AMP + diphosphate + H(+). Its pathway is amino-acid biosynthesis; L-arginine biosynthesis; L-arginine from L-ornithine and carbamoyl phosphate: step 2/3. This chain is Argininosuccinate synthase, found in Streptococcus thermophilus (strain CNRZ 1066).